A 300-amino-acid polypeptide reads, in one-letter code: Very-long-chain enoyl-CoA reductase (300 aa).

The chain crosses the membrane as a helical span at residues 91-111 (SLVFICEYAGPLFVYPIFYFL). An N-linked (GlcNAc...) asparagine glycan is attached at N163. Residues 191 to 211 (VYLGLGLWIIGEVFNYICHIQ) form a helical membrane-spanning segment. A glycan (N-linked (GlcNAc...) asparagine) is linked at N238. The chain crosses the membrane as a helical span at residues 243–263 (ILSWIGFSILTQTLTSWIFAL).

It belongs to the steroid 5-alpha reductase family.

The protein localises to the endoplasmic reticulum membrane. The catalysed reaction is a very-long-chain 2,3-saturated fatty acyl-CoA + NADP(+) = a very-long-chain (2E)-enoyl-CoA + NADPH + H(+). It functions in the pathway lipid metabolism; fatty acid biosynthesis. Functionally, catalyzes the last of the four reactions of the long-chain fatty acids elongation cycle. This endoplasmic reticulum-bound enzymatic process, allows the addition of 2 carbons to the chain of long- and very long-chain fatty acids/VLCFAs per cycle. This enzyme reduces the trans-2,3-enoyl-CoA fatty acid intermediate to an acyl-CoA that can be further elongated by entering a new cycle of elongation. Thereby, it participates in the production of VLCFAs of different chain lengths that are involved in multiple biological processes as precursors of membrane lipids and lipid mediators. In Dictyostelium discoideum (Social amoeba), this protein is Very-long-chain enoyl-CoA reductase (gpsn2).